A 388-amino-acid chain; its full sequence is Protein DJ-1 homolog D (388 aa).

2 PfpI endopeptidase domains span residues 5–190 and 198–383; these read RTVL…KALG and KRIL…ALLG. Cys-120 serves as the catalytic Nucleophile. Position 120 is a cysteine sulfenic acid (-SOH) (Cys-120). Residue His-121 is part of the active site. The active-site Nucleophile is Cys-313. Cys-313 is subject to Cysteine sulfinic acid (-SO2H). His-314 is a catalytic residue.

It belongs to the peptidase C56 family. In terms of assembly, homotrimer. In terms of processing, cys-120 and Cys-313 are oxidized to sulfinic acid.

The catalysed reaction is (R)-S-lactoylglutathione = methylglyoxal + glutathione. Possesses glyoxalase I activity. Catalyzes the conversion of hemimercaptal, formed from methylglyoxal and glutathione, to S-lactoylglutathione. May be involved in oxidative stress response. This is Protein DJ-1 homolog D (DJ1D) from Arabidopsis thaliana (Mouse-ear cress).